Consider the following 254-residue polypeptide: Homeobox protein BarH-like 1 (254 aa).

The tract at residues 1–20 is disordered; sequence MQRPGEPGAARFGPPEGCAD. Positions 142–201 form a DNA-binding region, homeobox; the sequence is GRRSRTVFTELQLMGLEKRFEKQKYLSTPDRIDLAESLGLSQLQVKTWYQNRRMKWKKIV. Positions 204-254 are disordered; it reads GGGLESPTKPKGRPKKNSIPTSEQLTEQERAKDAEKPAEVPGEPSDRSRED. Residues 230 to 254 are compositionally biased toward basic and acidic residues; that stretch reads EQERAKDAEKPAEVPGEPSDRSRED.

The protein belongs to the BAR homeobox family. As to expression, widely expressed. Expressed at higher levels in testis and heart. Detected in craniofacial tissue and adult iris, but not in lymphocytes, fibroblasts, choroid retina, retinal pigment epithelium, kidney, or fetal liver.

The protein resides in the nucleus. Transcription factor, which is involved in craniofacial development, in odontogenesis and in stomach organogenesis. May have a role in the differentiation of molars from incisors. Plays a role in suppressing endodermal Wnt activity. Binds to a regulatory module of the NCAM promoter. This Homo sapiens (Human) protein is Homeobox protein BarH-like 1 (BARX1).